The following is a 426-amino-acid chain: Probable M18 family aminopeptidase 2 (426 aa).

Residues His-79, His-156, and His-399 each coordinate Zn(2+).

It belongs to the peptidase M18 family. It depends on Zn(2+) as a cofactor.

The sequence is that of Probable M18 family aminopeptidase 2 (apeB) from Mycobacterium leprae (strain TN).